The chain runs to 446 residues: MNAQEANFDGLVGPTHNYAGLSFGNVASLNNEKSAANPKAAAKQGLRKMKQLADLGFAQGVLPPQERPSLRLLRELGFSGKDADVIAKAAKQAPELLAAASSASAMWTANAATVSPSADTSDGRVHFTPANLCSKLHRAIEHEATRRTLSTLFADPTHFAVHEALTGTPALGDEGAANHTRFCAEYGKPGIEFFVYGRAEYRRGPEPKRFPARQTFEASRAVAHRHGLAEEATVYAQQDPDVIDAGVFHNDVISVGNRDTLFTHERAFVNKQAIYDTLTAALDARGARLNVIEVPDAAVSVNDAVTSYLFNSQLLSRADGSQVLVVPQECRENANVAAYLDRLAAGNGPIHDVLVFDLRESMKNGGGPACLRLRVVLNDAERAAVTSNVWINDTLFASLDAWIDRHYRDRLAPEDLADPALLDESRTALDELTQILRVGSLYDFQR.

Residues 19-28 (AGLSFGNVAS), Asn110, and 137-138 (HR) each bind substrate. Glu174 is a catalytic residue. Arg213 is a binding site for substrate. The active site involves His249. 2 residues coordinate substrate: Asp251 and Asn364. Residue Cys370 is the Nucleophile of the active site.

This sequence belongs to the succinylarginine dihydrolase family. As to quaternary structure, homodimer.

It catalyses the reaction N(2)-succinyl-L-arginine + 2 H2O + 2 H(+) = N(2)-succinyl-L-ornithine + 2 NH4(+) + CO2. It participates in amino-acid degradation; L-arginine degradation via AST pathway; L-glutamate and succinate from L-arginine: step 2/5. Functionally, catalyzes the hydrolysis of N(2)-succinylarginine into N(2)-succinylornithine, ammonia and CO(2). The sequence is that of N-succinylarginine dihydrolase from Burkholderia orbicola (strain MC0-3).